Here is a 131-residue protein sequence, read N- to C-terminus: Profilin-11 (131 aa).

A disulfide bridge connects residues C13 and C115. The short motif at 81-97 is the Involved in PIP2 interaction element; sequence AVIRGKKGSGGITVKKT. T111 is subject to Phosphothreonine.

It belongs to the profilin family. As to quaternary structure, occurs in many kinds of cells as a complex with monomeric actin in a 1:1 ratio. Post-translationally, phosphorylated by MAP kinases.

Its subcellular location is the cytoplasm. The protein resides in the cytoskeleton. Its function is as follows. Binds to actin and affects the structure of the cytoskeleton. At high concentrations, profilin prevents the polymerization of actin, whereas it enhances it at low concentrations. The protein is Profilin-11 of Zea mays (Maize).